The sequence spans 189 residues: Protein GrpE (189 aa).

The segment covering 1 to 38 has biased composition (basic and acidic residues); sequence MTKSNETERMEESEETHSSDIRSASESDHASGSDHTES. The disordered stretch occupies residues 1 to 54; sequence MTKSNETERMEESEETHSSDIRSASESDHASGSDHTESADEIPTADAEQGELEQ.

Belongs to the GrpE family. Homodimer.

The protein localises to the cytoplasm. Participates actively in the response to hyperosmotic and heat shock by preventing the aggregation of stress-denatured proteins, in association with DnaK and GrpE. It is the nucleotide exchange factor for DnaK and may function as a thermosensor. Unfolded proteins bind initially to DnaJ; upon interaction with the DnaJ-bound protein, DnaK hydrolyzes its bound ATP, resulting in the formation of a stable complex. GrpE releases ADP from DnaK; ATP binding to DnaK triggers the release of the substrate protein, thus completing the reaction cycle. Several rounds of ATP-dependent interactions between DnaJ, DnaK and GrpE are required for fully efficient folding. This is Protein GrpE from Tropheryma whipplei (strain TW08/27) (Whipple's bacillus).